The chain runs to 242 residues: 1-(5-phosphoribosyl)-5-[(5-phosphoribosylamino)methylideneamino] imidazole-4-carboxamide isomerase (242 aa).

The Proton acceptor role is filled by D10. Catalysis depends on D132, which acts as the Proton donor.

This sequence belongs to the HisA/HisF family.

The protein localises to the cytoplasm. The enzyme catalyses 1-(5-phospho-beta-D-ribosyl)-5-[(5-phospho-beta-D-ribosylamino)methylideneamino]imidazole-4-carboxamide = 5-[(5-phospho-1-deoxy-D-ribulos-1-ylimino)methylamino]-1-(5-phospho-beta-D-ribosyl)imidazole-4-carboxamide. It functions in the pathway amino-acid biosynthesis; L-histidine biosynthesis; L-histidine from 5-phospho-alpha-D-ribose 1-diphosphate: step 4/9. In Methanopyrus kandleri (strain AV19 / DSM 6324 / JCM 9639 / NBRC 100938), this protein is 1-(5-phosphoribosyl)-5-[(5-phosphoribosylamino)methylideneamino] imidazole-4-carboxamide isomerase.